The chain runs to 62 residues: Photosystem II reaction center protein H (62 aa).

A helical transmembrane segment spans residues 30–50 (PVMAGIGFMLLIFLVTILQIY).

The protein belongs to the PsbH family. In terms of assembly, PSII is composed of 1 copy each of membrane proteins PsbA, PsbB, PsbC, PsbD, PsbE, PsbF, PsbH, PsbI, PsbJ, PsbK, PsbL, PsbM, PsbT, PsbX, PsbY, Psb30/Ycf12, peripheral proteins PsbO, CyanoQ (PsbQ), PsbU, PsbV and a large number of cofactors. It forms dimeric complexes.

Its subcellular location is the cellular thylakoid membrane. One of the components of the core complex of photosystem II (PSII), required for its stability and/or assembly. PSII is a light-driven water:plastoquinone oxidoreductase that uses light energy to abstract electrons from H(2)O, generating O(2) and a proton gradient subsequently used for ATP formation. It consists of a core antenna complex that captures photons, and an electron transfer chain that converts photonic excitation into a charge separation. This is Photosystem II reaction center protein H from Prochlorococcus marinus (strain MIT 9303).